Consider the following 76-residue polypeptide: Sec-independent protein translocase protein TatA (76 aa).

A helical membrane pass occupies residues Met1 to Gly21. The segment at Met43–Ala76 is disordered. Positions Asn64–Ala76 are enriched in basic and acidic residues.

The protein belongs to the TatA/E family. As to quaternary structure, the Tat system comprises two distinct complexes: a TatABC complex, containing multiple copies of TatA, TatB and TatC subunits, and a separate TatA complex, containing only TatA subunits. Substrates initially bind to the TatABC complex, which probably triggers association of the separate TatA complex to form the active translocon.

The protein resides in the cell inner membrane. Its function is as follows. Part of the twin-arginine translocation (Tat) system that transports large folded proteins containing a characteristic twin-arginine motif in their signal peptide across membranes. TatA could form the protein-conducting channel of the Tat system. The protein is Sec-independent protein translocase protein TatA of Burkholderia multivorans (strain ATCC 17616 / 249).